Reading from the N-terminus, the 172-residue chain is Large ribosomal subunit protein uL10 (172 aa).

It belongs to the universal ribosomal protein uL10 family. As to quaternary structure, part of the ribosomal stalk of the 50S ribosomal subunit. The N-terminus interacts with L11 and the large rRNA to form the base of the stalk. The C-terminus forms an elongated spine to which L12 dimers bind in a sequential fashion forming a multimeric L10(L12)X complex.

In terms of biological role, forms part of the ribosomal stalk, playing a central role in the interaction of the ribosome with GTP-bound translation factors. The sequence is that of Large ribosomal subunit protein uL10 from Methylorubrum populi (strain ATCC BAA-705 / NCIMB 13946 / BJ001) (Methylobacterium populi).